The chain runs to 977 residues: Short transient receptor potential channel 4 (977 aa).

The Cytoplasmic segment spans residues methionine 1–arginine 324. ANK repeat units lie at residues leucine 29–lysine 60, arginine 71–asparagine 93, valine 96–histidine 118, and proline 141–glycine 165. Zn(2+)-binding residues include histidine 172, cysteine 176, cysteine 178, and cysteine 181. Residues leucine 223–arginine 260 are a coiled coil. An intramembrane region (discontinuously helical) is located at residues histidine 325–isoleucine 359. The Cytoplasmic portion of the chain corresponds to arginine 360–proline 362. A helical membrane pass occupies residues phenylalanine 363–alanine 383. At serine 384–glutamate 403 the chain is on the extracellular side. Residues tryptophan 404–isoleucine 418 traverse the membrane as a helical segment. Ca(2+) contacts are provided by glutamate 417, glutamine 420, asparagine 435, and aspartate 438. The Cytoplasmic segment spans residues lysine 419–aspartate 432. Residues tryptophan 433 to isoleucine 453 form a helical membrane-spanning segment. The Extracellular portion of the chain corresponds to valine 454–leucine 475. Residues valine 476–alanine 498 form a helical membrane-spanning segment. Over asparagine 499–arginine 511 the chain is Cytoplasmic. Residues methionine 512–leucine 534 traverse the membrane as a helical segment. Over asparagine 535 to threonine 599 the chain is Extracellular. Residues cysteine 549 and cysteine 554 are joined by a disulfide bond. The helical transmembrane segment at methionine 600 to methionine 620 threads the bilayer. Positions methionine 615–leucine 977 are interaction with ITPR1, ITPR2 and ITPR3. The Cytoplasmic portion of the chain corresponds to asparagine 621 to leucine 977. The segment at alanine 767–arginine 790 is disordered. Over residues serine 776–lysine 787 the composition is skewed to basic and acidic residues. Phosphotyrosine; by FYN occurs at positions 959 and 972. Positions threonine 975 to leucine 977 are PDZ-binding domain.

The protein belongs to the transient receptor (TC 1.A.4) family. STrpC subfamily. TRPC4 sub-subfamily. As to quaternary structure, homotetramer. Heterotetramer with TRPC1 and/or TRPC5. Forms a heteromeric ion channel with TRPC1, with a 1:3 TRPC1:TRPC4 stoichiometry. Interacts with TRPC4AP. Isoform alpha but not isoform beta interacts with ITPR1, ITPR2 and ITPR3. Interacts with NHERF1. Interacts with MX1 and RNF24. Interacts (via CIRB domain) with SESTD1 (via the spectrin 1 repeat) and SPTBN5 (via C-terminus). Interacts with CDH5 and CTNNB1. Interacts (via protein 4.1-binding domain) with EPB41L2. Interacts with PLSCR1.

Its subcellular location is the cell membrane. The catalysed reaction is Ca(2+)(in) = Ca(2+)(out). It catalyses the reaction Na(+)(in) = Na(+)(out). The enzyme catalyses Li(+)(in) = Li(+)(out). It carries out the reaction Cs(+)(in) = Cs(+)(out). May be operated by a phosphatidylinositol second messenger system activated by receptor tyrosine kinases or G-protein coupled receptors. May be activated by intracellular calcium store depletion. Forms a receptor-activated non-selective calcium permeant cation channel. Acts as a cell-cell contact-dependent endothelial calcium entry channel. Forms a homomeric ion channel or a heteromeric ion channel with TRPC1; the heteromeric ion channel has reduced calcium permeability compared to the homomeric channel. Also permeable to monovalent ions including sodium, lithium and cesium ions. Functionally, forms a non-selective a receptor-activated calcium permeant cation channel. Probably is operated by a phosphatidylinositol second messenger system activated by receptor tyrosine kinases or G-protein coupled receptors. In Rattus norvegicus (Rat), this protein is Short transient receptor potential channel 4 (Trpc4).